The following is a 758-amino-acid chain: 5-methyltetrahydropteroyltriglutamate--homocysteine methyltransferase (758 aa).

Residues 16–19 (RELK) and Lys116 contribute to the 5-methyltetrahydropteroyltri-L-glutamate site. L-homocysteine is bound by residues 436-438 (IGS) and Glu489. Residues 436–438 (IGS) and Glu489 contribute to the L-methionine site. 5-methyltetrahydropteroyltri-L-glutamate is bound by residues 520 to 521 (RC) and Trp566. Asp604 lines the L-homocysteine pocket. Asp604 contacts L-methionine. Residue Glu610 participates in 5-methyltetrahydropteroyltri-L-glutamate binding. 3 residues coordinate Zn(2+): His646, Cys648, and Glu670. The active-site Proton donor is His699. Position 731 (Cys731) interacts with Zn(2+).

It belongs to the vitamin-B12 independent methionine synthase family. Zn(2+) is required as a cofactor.

It catalyses the reaction 5-methyltetrahydropteroyltri-L-glutamate + L-homocysteine = tetrahydropteroyltri-L-glutamate + L-methionine. It functions in the pathway amino-acid biosynthesis; L-methionine biosynthesis via de novo pathway; L-methionine from L-homocysteine (MetE route): step 1/1. In terms of biological role, catalyzes the transfer of a methyl group from 5-methyltetrahydrofolate to homocysteine resulting in methionine formation. The sequence is that of 5-methyltetrahydropteroyltriglutamate--homocysteine methyltransferase from Nitrosococcus oceani (strain ATCC 19707 / BCRC 17464 / JCM 30415 / NCIMB 11848 / C-107).